The sequence spans 649 residues: Lysophospholipase (649 aa).

The signal sequence occupies residues 1–21; it reads MNLKEWLLFSDAVFFAQGTLA. 17 N-linked (GlcNAc...) asparagine glycosylation sites follow: Asn-32, Asn-51, Asn-77, Asn-90, Asn-121, Asn-158, Asn-168, Asn-213, Asn-275, Asn-343, Asn-386, Asn-457, Asn-487, Asn-511, Asn-539, Asn-563, and Asn-580. The 551-residue stretch at 34–584 folds into the PLA2c domain; it reads SCDEDINLIR…TNYCWNGTID (551 aa).

It belongs to the lysophospholipase family.

Its subcellular location is the secreted. It catalyses the reaction a 1-acyl-sn-glycero-3-phosphocholine + H2O = sn-glycerol 3-phosphocholine + a fatty acid + H(+). Catalyzes the release of fatty acids from lysophospholipids. This Torulaspora delbrueckii (Yeast) protein is Lysophospholipase.